The following is a 244-amino-acid chain: Probable transcriptional regulatory protein MMOB1910 (244 aa).

It belongs to the TACO1 family.

It is found in the cytoplasm. The protein is Probable transcriptional regulatory protein MMOB1910 of Mycoplasma mobile (strain ATCC 43663 / 163K / NCTC 11711) (Mesomycoplasma mobile).